A 240-amino-acid chain; its full sequence is Glyceraldehyde 3-phosphate phosphatase (240 aa).

Belongs to the HAD-like hydrolase superfamily. Mg(2+) is required as a cofactor.

Catalyzes the dephosphorylation of D,L-glyceraldehyde 3-phosphate in vitro. This Pyrococcus furiosus (strain ATCC 43587 / DSM 3638 / JCM 8422 / Vc1) protein is Glyceraldehyde 3-phosphate phosphatase.